The primary structure comprises 521 residues: SET and MYND domain-containing protein DDB_G0292140 (521 aa).

The segment at Met1–Lys101 is disordered. Low complexity predominate over residues Thr12–Thr55. Positions Thr56–Thr65 are enriched in pro residues. Low complexity predominate over residues Pro66–Lys90. Residues Gly91–Lys101 are compositionally biased toward basic residues. Residues Trp122–Ile406 enclose the SET domain. Residues Cys167, Cys170, Cys188, Cys191, Cys197, Cys201, His209, and Cys213 each coordinate Zn(2+). An MYND-type zinc finger spans residues Cys167–Cys213. The disordered stretch occupies residues Gln442–Asn521. A compositionally biased stretch (acidic residues) spans Lys448–Asp469. Residues Asp470–Gly485 show a composition bias toward basic and acidic residues. Residues Ser486–Asn495 show a composition bias toward acidic residues. The segment covering Asn497–His514 has biased composition (low complexity).

The protein belongs to the class V-like SAM-binding methyltransferase superfamily.

In terms of biological role, probable methyltransferase. The polypeptide is SET and MYND domain-containing protein DDB_G0292140 (Dictyostelium discoideum (Social amoeba)).